Consider the following 381-residue polypeptide: Flap endonuclease 1 (381 aa).

An N-domain region spans residues 1 to 105 (MGIKNLATLI…YELDKRKVRR (105 aa)). Position 34 (Asp-34) interacts with Mg(2+). DNA contacts are provided by Arg-47 and Arg-71. Residues Asp-87, Glu-156, Glu-158, Asp-177, and Asp-179 each coordinate Mg(2+). The I-domain stretch occupies residues 120–251 (EIIKHERRLV…VNALKLIKEH (132 aa)). Glu-156 is a binding site for DNA. Residues Gly-229 and Asp-231 each contribute to the DNA site. Mg(2+) is bound at residue Asp-231. Residues 339 to 347 (VQKRLDSFF) are interaction with PCNA. Residues 360–381 (AAKKAKDAKKKAAAKGKIAKRR) are disordered. The segment covering 365–381 (KDAKKKAAAKGKIAKRR) has biased composition (basic residues).

Belongs to the XPG/RAD2 endonuclease family. FEN1 subfamily. Interacts with PCNA. Three molecules of FEN1 bind to one PCNA trimer with each molecule binding to one PCNA monomer. PCNA stimulates the nuclease activity without altering cleavage specificity. The cofactor is Mg(2+). Post-translationally, phosphorylated. Phosphorylation upon DNA damage induces relocalization to the nuclear plasma.

It localises to the nucleus. The protein localises to the nucleolus. The protein resides in the nucleoplasm. It is found in the mitochondrion. Functionally, structure-specific nuclease with 5'-flap endonuclease and 5'-3' exonuclease activities involved in DNA replication and repair. During DNA replication, cleaves the 5'-overhanging flap structure that is generated by displacement synthesis when DNA polymerase encounters the 5'-end of a downstream Okazaki fragment. It enters the flap from the 5'-end and then tracks to cleave the flap base, leaving a nick for ligation. Also involved in the long patch base excision repair (LP-BER) pathway, by cleaving within the apurinic/apyrimidinic (AP) site-terminated flap. Acts as a genome stabilization factor that prevents flaps from equilibrating into structures that lead to duplications and deletions. Also possesses 5'-3' exonuclease activity on nicked or gapped double-stranded DNA, and exhibits RNase H activity. Also involved in replication and repair of rDNA and in repairing mitochondrial DNA. The sequence is that of Flap endonuclease 1 from Kluyveromyces lactis (strain ATCC 8585 / CBS 2359 / DSM 70799 / NBRC 1267 / NRRL Y-1140 / WM37) (Yeast).